Consider the following 318-residue polypeptide: Lipid A biosynthesis acyltransferase (318 aa).

Residues proline 27 to phenylalanine 47 traverse the membrane as a helical segment. The HXXXXD motif signature appears at histidine 145–aspartate 150.

Belongs to the LpxL/LpxM/LpxP family. LpxM subfamily.

It is found in the cell inner membrane. The catalysed reaction is an alpha-Kdo-(2-&gt;4)-alpha-Kdo-(2-&gt;6)-(acyl)-lipid IVA + a fatty acyl-[ACP] = an alpha-Kdo-(2-&gt;4)-alpha-Kdo-(2-&gt;6)-lipid A + holo-[ACP]. It functions in the pathway glycolipid biosynthesis; KDO(2)-lipid A biosynthesis; KDO(2)-lipid A from CMP-3-deoxy-D-manno-octulosonate and lipid IV(A): step 4/4. Its pathway is bacterial outer membrane biogenesis; lipopolysaccharide biosynthesis. Functionally, catalyzes the transfer of an acyl chain from an acyl-[acyl-carrier-protein] (ACP) to a Kdo(2)-(acyl)-lipid IV(A) to form a Kdo(2)-lipid A. The protein is Lipid A biosynthesis acyltransferase of Haemophilus influenzae (strain ATCC 51907 / DSM 11121 / KW20 / Rd).